We begin with the raw amino-acid sequence, 67 residues long: DNA-directed RNA polymerase subunit omega (67 aa).

This sequence belongs to the RNA polymerase subunit omega family. As to quaternary structure, the RNAP catalytic core consists of 2 alpha, 1 beta, 1 beta' and 1 omega subunit. When a sigma factor is associated with the core the holoenzyme is formed, which can initiate transcription.

The catalysed reaction is RNA(n) + a ribonucleoside 5'-triphosphate = RNA(n+1) + diphosphate. Promotes RNA polymerase assembly. Latches the N- and C-terminal regions of the beta' subunit thereby facilitating its interaction with the beta and alpha subunits. The polypeptide is DNA-directed RNA polymerase subunit omega (Methylibium petroleiphilum (strain ATCC BAA-1232 / LMG 22953 / PM1)).